The primary structure comprises 398 residues: Nicotinate phosphoribosyltransferase 2 (398 aa).

His224 bears the Phosphohistidine; by autocatalysis mark.

It belongs to the NAPRTase family. Post-translationally, transiently phosphorylated on a His residue during the reaction cycle. Phosphorylation strongly increases the affinity for substrates and increases the rate of nicotinate D-ribonucleotide production. Dephosphorylation regenerates the low-affinity form of the enzyme, leading to product release.

It catalyses the reaction nicotinate + 5-phospho-alpha-D-ribose 1-diphosphate + ATP + H2O = nicotinate beta-D-ribonucleotide + ADP + phosphate + diphosphate. Its pathway is cofactor biosynthesis; NAD(+) biosynthesis; nicotinate D-ribonucleotide from nicotinate: step 1/1. Functionally, catalyzes the synthesis of beta-nicotinate D-ribonucleotide from nicotinate and 5-phospho-D-ribose 1-phosphate at the expense of ATP. This chain is Nicotinate phosphoribosyltransferase 2, found in Pseudomonas aeruginosa (strain ATCC 15692 / DSM 22644 / CIP 104116 / JCM 14847 / LMG 12228 / 1C / PRS 101 / PAO1).